Reading from the N-terminus, the 500-residue chain is MAPPPVNSGDAAAAATGEKSKLSPSGLPIREIPGGYGVPFFSPLRDRLDYFYFQGAEEYFRSRVARHGGATVLRVNMPPGPFISGNPRVVALLDARSFRVLLDDSMVDKADTLDGTYMPSRALFGGHRPLAFLDAADPRHAKIKRVVMSLAAARMHHVAPAFRAAFAAMFDAVEAGLGAAVEFNKLNMRYMLDFTCAALFGGEPPSKVVGDGAVTKAMAWLAFQLHPIASKVVKPWPLEELLLHTFSLPPFLVRRGYADLKAYFADAAAAVLDDAEKSHTGIPRDELLDNLVFVAIFNAFGGFKIFLPHIVKWLARAGPELHAKLATEVRATVPTGEDDGITLAAVERMPLVKSVVWEALRMNPPVEFQYGHARRDMVVESHDAAYEVRKGEMLFGYQPLATRDEKVFDRAGEFVADRFVAGGAAGDRPLLEHVVWSNGPETRAPSEGNKQCPGKDMVVAVGRLMVAELFRRYDTFAADVVEAPVEPVVTFTSLTRASSG.

Positions 1–26 (MAPPPVNSGDAAAAATGEKSKLSPSG) are disordered. Residues 297-298 (FN), Lys-304, and 365-368 (PVEF) each bind substrate. Cys-452 serves as a coordination point for heme.

The protein belongs to the cytochrome P450 family. The cofactor is heme. In terms of tissue distribution, not expressed in dark-grown seedlings.

It catalyses the reaction (13S)-hydroperoxy-(9Z,11E,15Z)-octadecatrienoate = (9Z,13S,15Z)-12,13-epoxyoctadeca-9,11,15-trienoate + H2O. It participates in lipid metabolism; oxylipin biosynthesis. In terms of biological role, involved in the biosynthesis of jasmonic acid, a growth regulator that is implicated also as a signaling molecule in plant defense. Converts 13-hydroperoxylinolenic acid to 12,13-epoxylinolenic acid. In Oryza sativa subsp. japonica (Rice), this protein is Allene oxide synthase 3 (CYP74A3).